Here is a 121-residue protein sequence, read N- to C-terminus: MKFGVGFLLSCLVALNTVQNMLALSCLPCDFDTLKCSPLPDDDDCFPAYTPCGCCPQCAGEEDDFCDNFTVRCHPDLVCVNATGFEKKFVYWYEFDFKGTCQESELETEYEYEYEENETKK.

The N-terminal stretch at 1–23 (MKFGVGFLLSCLVALNTVQNMLA) is a signal peptide. The 81-residue stretch at 24–104 (LSCLPCDFDT…FDFKGTCQES (81 aa)) folds into the IGFBP N-terminal domain. Cystine bridges form between Cys-26/Cys-52, Cys-29/Cys-54, Cys-36/Cys-55, Cys-45/Cys-58, Cys-66/Cys-79, and Cys-73/Cys-101. Residues Asn-68, Asn-81, and Asn-117 are each glycosylated (N-linked (GlcNAc...) asparagine).

In terms of tissue distribution, component of the acid-insoluble organic matrix of calcified layers of the shell (at protein level).

The protein localises to the secreted. This chain is Perlustrin-like protein, found in Lottia gigantea (Giant owl limpet).